The following is a 261-amino-acid chain: tRNA pseudouridine synthase A (261 aa).

The active-site Nucleophile is Asp-51. Substrate is bound at residue Tyr-109.

Belongs to the tRNA pseudouridine synthase TruA family. Homodimer.

The enzyme catalyses uridine(38/39/40) in tRNA = pseudouridine(38/39/40) in tRNA. In terms of biological role, formation of pseudouridine at positions 38, 39 and 40 in the anticodon stem and loop of transfer RNAs. This Shewanella baltica (strain OS185) protein is tRNA pseudouridine synthase A.